We begin with the raw amino-acid sequence, 314 residues long: 1,4-dihydroxy-2-naphthoyl-CoA synthase (314 aa).

Substrate-binding positions include Arg-58, 103–107 (SGGDQ), Tyr-115, 157–161 (WAAGG), Thr-184, Ser-190, Tyr-287, and Lys-302.

Belongs to the enoyl-CoA hydratase/isomerase family. MenB subfamily.

The enzyme catalyses 2-succinylbenzoyl-CoA + H(+) = 1,4-dihydroxy-2-naphthoyl-CoA + H2O. The protein operates within quinol/quinone metabolism; 1,4-dihydroxy-2-naphthoate biosynthesis; 1,4-dihydroxy-2-naphthoate from chorismate: step 6/7. It participates in quinol/quinone metabolism; menaquinone biosynthesis. In terms of biological role, converts o-succinylbenzoyl-CoA (OSB-CoA) to 1,4-dihydroxy-2-naphthoyl-CoA (DHNA-CoA). This Mycobacterium tuberculosis (strain CDC 1551 / Oshkosh) protein is 1,4-dihydroxy-2-naphthoyl-CoA synthase.